A 725-amino-acid polypeptide reads, in one-letter code: Catalase-peroxidase (725 aa).

Positions 90–213 form a cross-link, tryptophyl-tyrosyl-methioninium (Trp-Tyr) (with M-239); the sequence is WHSAGTYRTG…LAAVQMGLIY (124 aa). Residue His91 is the Proton acceptor of the active site. Residues 213–239 constitute a cross-link (tryptophyl-tyrosyl-methioninium (Tyr-Met) (with W-90)); it reads YVNPEGPNGNPDPVAAAKDIRETFARM. Position 254 (His254) interacts with heme b.

This sequence belongs to the peroxidase family. Peroxidase/catalase subfamily. In terms of assembly, homodimer or homotetramer. Requires heme b as cofactor. In terms of processing, formation of the three residue Trp-Tyr-Met cross-link is important for the catalase, but not the peroxidase activity of the enzyme.

The catalysed reaction is H2O2 + AH2 = A + 2 H2O. The enzyme catalyses 2 H2O2 = O2 + 2 H2O. Functionally, bifunctional enzyme with both catalase and broad-spectrum peroxidase activity. This is Catalase-peroxidase from Hahella chejuensis (strain KCTC 2396).